The sequence spans 300 residues: DDRGK domain-containing protein 1 (300 aa).

The Lumenal portion of the chain corresponds to 1–2; it reads MD. Residues 3 to 23 form a helical membrane-spanning segment; that stretch reads VVLYIAAAAILLVLIVFSVKI. At 24-300 the chain is on the cytoplasmic side; that stretch reads RGRTQDADVE…NLTPDIHSSA (277 aa). The disordered stretch occupies residues 28-173; that stretch reads QDADVEDHQN…RVKEEQERRE (146 aa). A compositionally biased stretch (acidic residues) spans 78-90; the sequence is NEDSPVEADEDEE. Over residues 112–173 the composition is skewed to basic and acidic residues; the sequence is KLEEKQARKA…RVKEEQERRE (62 aa). The UFM1-interacting motif (UFIM) signature appears at 183-197; it reads SFIIEDQGEAEELTE. The PCI domain occupies 217–261; it reads VLLEDLASQFGLRTQDAIARLQDLIADGSLTGVIDDRGKFIFITP.

Belongs to the DDRGK1 family. As to quaternary structure, component of the UFM1 ribosome E3 ligase (UREL) complex, composed of ufl1, ddrgk1 and cdk5rap3.

It localises to the endoplasmic reticulum membrane. Component of the UFM1 ribosome E3 ligase (UREL) complex, a multiprotein complex that catalyzes ufmylation of endoplasmic reticulum-docked proteins. The UREL complex plays a key role in ribosome recycling by mediating mono-ufmylation of the RPL26/uL24 subunit of the 60S ribosome following ribosome dissociation: ufmylation weakens the junction between post-termination 60S subunits and SEC61 translocons, promoting release and recycling of the large ribosomal subunit from the endoplasmic reticulum membrane. Ufmylation of RPL26/uL24 and subsequent 60S ribosome recycling either take place after normal termination of translation or after ribosome stalling during cotranslational translocation at the endoplasmic reticulum. Within the UREL complex, DDRGK1 tethers the complex to the endoplasmic reticulum membrane to restrict its activity to endoplasmic reticulum-docked ribosomes and acts as an ufmylation 'reader': following RPL26/uL24 ufmylation, DDRGK1 specifically binds to ufmylated RPL26/uL24 via its UFIM motif, resulting in stable association between the 60S ribosome and the UREL complex, followed by dissociation of the 60S ribosome subunit from the endoplasmic reticulum membrane. The UREL complex is also involved in reticulophagy in response to endoplasmic reticulum stress by promoting ufmylation of proteins such as CYB5R3 and RPN1, thereby promoting lysosomal degradation of ufmylated proteins. Plays a role in cartilage development through sox9, inhibiting the ubiquitin-mediated proteasomal degradation of this transcriptional regulator. Required for stabilization and ufmylation of ATG9A. The chain is DDRGK domain-containing protein 1 from Danio rerio (Zebrafish).